Here is a 116-residue protein sequence, read N- to C-terminus: Methionine-R-sulfoxide reductase B1 (116 aa).

Positions 1–106 (MSFCSFFGGE…FSSSLKFVPK (106 aa)) constitute a MsrB domain. Residues Cys-23, Cys-26, Cys-71, and Cys-74 each contribute to the Zn(2+) site. Catalysis depends on Sec-95, which acts as the Nucleophile. Position 95 (Sec-95) is a non-standard amino acid, selenocysteine.

It belongs to the MsrB Met sulfoxide reductase family. It depends on Zn(2+) as a cofactor. Post-translationally, truncated MSRB1/SEPX1 proteins produced by failed UGA/Sec decoding are ubiquitinated by the CRL2(FEM1C) E3 ubiquitin-protein ligase complex.

The protein resides in the cytoplasm. It localises to the nucleus. The protein localises to the cytoskeleton. It carries out the reaction L-methionyl-[protein] + [thioredoxin]-disulfide + H2O = L-methionyl-(R)-S-oxide-[protein] + [thioredoxin]-dithiol. The catalysed reaction is [thioredoxin]-disulfide + L-methionine + H2O = L-methionine (R)-S-oxide + [thioredoxin]-dithiol. In terms of biological role, methionine-sulfoxide reductase that specifically reduces methionine (R)-sulfoxide back to methionine. While in many cases, methionine oxidation is the result of random oxidation following oxidative stress, methionine oxidation is also a post-translational modification that takes place on specific residue. Acts as a regulator of actin assembly by reducing methionine (R)-sulfoxide mediated by MICALs (MICAL1, MICAL2 or MICAL3) on actin, thereby promoting filament repolymerization. Plays a role in innate immunity by reducing oxidized actin, leading to actin repolymerization in macrophages. The polypeptide is Methionine-R-sulfoxide reductase B1 (MSRB1) (Pongo abelii (Sumatran orangutan)).